We begin with the raw amino-acid sequence, 321 residues long: MKTIGILTSGGDAPGMNAAIRAVVRTGIYYGLKVKGIMRGFAGLVEDEVIDLGLSSVGDIIQKGGTILRTARCEEFKQKEVRKKAYETLQKHGIEGLVVIGGDGSFRGAQLLSEEWNVNTICIPGTIDNDIPCTDYTIGFDTACNTVIDAINKIRDTATSHERANIIEVMGRNSGYIALYAGVAGGAEMIILPEVEWSIDELCDKITYGIKRGKLHHIIVLAEGVMSAPELAKMIKERLPKLDLRYTILGHIQRGGAPTVMDRVLASQMGARAVELLLENKTKRVISIRNNQIVDDDIDEALSMKKEFNRKLYELSKILSI.

G11 contributes to the ATP binding site. Residue 21–25 (RAVVR) coordinates ADP. ATP contacts are provided by residues 72 to 73 (RC) and 102 to 105 (GDGS). Residue D103 participates in Mg(2+) binding. 126 to 128 (TID) contributes to the substrate binding site. Catalysis depends on D128, which acts as the Proton acceptor. R155 contacts ADP. Substrate-binding positions include R163 and 170 to 172 (MGR). ADP contacts are provided by residues 186-188 (GAE), R212, and 214-216 (KLH). Residues E223, R245, and 251–254 (HIQR) contribute to the substrate site.

Belongs to the phosphofructokinase type A (PFKA) family. ATP-dependent PFK group I subfamily. Prokaryotic clade 'B1' sub-subfamily. Homotetramer. It depends on Mg(2+) as a cofactor.

The protein resides in the cytoplasm. The enzyme catalyses beta-D-fructose 6-phosphate + ATP = beta-D-fructose 1,6-bisphosphate + ADP + H(+). It participates in carbohydrate degradation; glycolysis; D-glyceraldehyde 3-phosphate and glycerone phosphate from D-glucose: step 3/4. Its activity is regulated as follows. Allosterically activated by ADP and other diphosphonucleosides, and allosterically inhibited by phosphoenolpyruvate. Its function is as follows. Catalyzes the phosphorylation of D-fructose 6-phosphate to fructose 1,6-bisphosphate by ATP, the first committing step of glycolysis. This chain is ATP-dependent 6-phosphofructokinase, found in Caldanaerobacter subterraneus subsp. tengcongensis (strain DSM 15242 / JCM 11007 / NBRC 100824 / MB4) (Thermoanaerobacter tengcongensis).